Reading from the N-terminus, the 104-residue chain is Salivary protein FS145 (104 aa).

Residues 1 to 18 (MKLFAVFLLFCLVNQIYC) form the signal peptide. 4 cysteine pairs are disulfide-bonded: Cys-32/Cys-80, Cys-62/Cys-89, Cys-72/Cys-100, and Cys-76/Cys-102. Positions 92-94 (WGD) match the Putative integrin attachment site; atypical (WGD) motif.

Interacts with host integrin alpha-V/beta-3 (ITGAV:ITGB3).

Its subcellular location is the secreted. Its function is as follows. Inhibits proliferation, adhesion and migration of host cells as well as host angiogenesis by blocking host integrin alpha-V/beta-3 (ITGAV:ITGB3). The polypeptide is Salivary protein FS145 (Xenopsylla cheopis (Oriental rat flea)).